The sequence spans 273 residues: Outer surface protein A (273 aa).

Residues 1-16 (MKKYLLGIGLILALIA) form the signal peptide. Cys17 carries N-palmitoyl cysteine lipidation. Cys17 carries the S-diacylglycerol cysteine lipid modification.

It belongs to the OspA lipoprotein family.

It is found in the cell outer membrane. The protein localises to the cell surface. The chain is Outer surface protein A from Borreliella burgdorferi (Lyme disease spirochete).